We begin with the raw amino-acid sequence, 257 residues long: 5-oxoprolinase subunit A (257 aa).

This sequence belongs to the LamB/PxpA family. Forms a complex composed of PxpA, PxpB and PxpC.

It carries out the reaction 5-oxo-L-proline + ATP + 2 H2O = L-glutamate + ADP + phosphate + H(+). Functionally, catalyzes the cleavage of 5-oxoproline to form L-glutamate coupled to the hydrolysis of ATP to ADP and inorganic phosphate. The protein is 5-oxoprolinase subunit A of Oceanobacillus iheyensis (strain DSM 14371 / CIP 107618 / JCM 11309 / KCTC 3954 / HTE831).